A 179-amino-acid polypeptide reads, in one-letter code: Large ribosomal subunit protein uL5 (179 aa).

Belongs to the universal ribosomal protein uL5 family. As to quaternary structure, part of the 50S ribosomal subunit; part of the 5S rRNA/L5/L18/L25 subcomplex. Contacts the 5S rRNA and the P site tRNA. Forms a bridge to the 30S subunit in the 70S ribosome.

This is one of the proteins that bind and probably mediate the attachment of the 5S RNA into the large ribosomal subunit, where it forms part of the central protuberance. In the 70S ribosome it contacts protein S13 of the 30S subunit (bridge B1b), connecting the 2 subunits; this bridge is implicated in subunit movement. Contacts the P site tRNA; the 5S rRNA and some of its associated proteins might help stabilize positioning of ribosome-bound tRNAs. This is Large ribosomal subunit protein uL5 from Polaromonas naphthalenivorans (strain CJ2).